The chain runs to 284 residues: Serine/arginine-rich splicing factor RS2Z32 (284 aa).

The RRM domain maps to 11–81 (TRLYVGRLSS…SRITVEASRG (71 aa)). A disordered region spans residues 74 to 97 (ITVEASRGAPRGSRDNGSRGPPPG). 2 consecutive CCHC-type zinc fingers follow at residues 99–116 (GRCFNCGVDGHWARDCTA) and 121–138 (NKCYRCGERGHIERNCKN). Positions 132–284 (IERNCKNSPS…RPSPKGSESP (153 aa)) are disordered. Residues 159 to 180 (RSPRRRRSPSRSRSYSRGRSYS) show a composition bias toward basic residues. A phosphoserine mark is found at S166, S168, and S184. Positions 186–203 (VRREKSVEDRSRSPKAME) are enriched in basic and acidic residues. 10 positions are modified to phosphoserine: S205, S207, S214, S216, S225, S235, S255, S265, S277, and S281. Basic and acidic residues predominate over residues 209 to 236 (KGRDQSLSPDRKVIDASPKRGSDYDGSP).

This sequence belongs to the splicing factor SR family. RS2Z subfamily. As to quaternary structure, component of the spliceosome. Post-translationally, extensively phosphorylated on serine residues in the RS domain.

The protein localises to the nucleus. Probably involved in intron recognition and spliceosome assembly. The protein is Serine/arginine-rich splicing factor RS2Z32 (RS2Z32) of Arabidopsis thaliana (Mouse-ear cress).